A 220-amino-acid chain; its full sequence is Octanoyltransferase (220 aa).

The BPL/LPL catalytic domain maps to 31–211; it reads GTAADHLLLL…HFARIFDFEM (181 aa). Substrate-binding positions include 76 to 83, 143 to 145, and 156 to 158; these read RGGDVTYH, AIG, and GFA. Cys-174 serves as the catalytic Acyl-thioester intermediate.

Belongs to the LipB family.

The protein resides in the cytoplasm. The enzyme catalyses octanoyl-[ACP] + L-lysyl-[protein] = N(6)-octanoyl-L-lysyl-[protein] + holo-[ACP] + H(+). It functions in the pathway protein modification; protein lipoylation via endogenous pathway; protein N(6)-(lipoyl)lysine from octanoyl-[acyl-carrier-protein]: step 1/2. In terms of biological role, catalyzes the transfer of endogenously produced octanoic acid from octanoyl-acyl-carrier-protein onto the lipoyl domains of lipoate-dependent enzymes. Lipoyl-ACP can also act as a substrate although octanoyl-ACP is likely to be the physiological substrate. In Solibacter usitatus (strain Ellin6076), this protein is Octanoyltransferase.